The primary structure comprises 776 residues: Protein translocase subunit SecA 2 (776 aa).

Residues Gln-80, 98–102 (GEGKT), and Asp-486 contribute to the ATP site.

The protein belongs to the SecA family. Monomer and homodimer. Part of the essential Sec protein translocation apparatus which comprises SecA, SecYEG and auxiliary proteins SecDF. Other proteins may also be involved.

The protein resides in the cell membrane. The protein localises to the cytoplasm. It carries out the reaction ATP + H2O + cellular proteinSide 1 = ADP + phosphate + cellular proteinSide 2.. Functionally, part of the Sec protein translocase complex. Interacts with the SecYEG preprotein conducting channel. Has a central role in coupling the hydrolysis of ATP to the transfer of proteins into and across the cell membrane, serving as an ATP-driven molecular motor driving the stepwise translocation of polypeptide chains across the membrane. The polypeptide is Protein translocase subunit SecA 2 (Listeria innocua serovar 6a (strain ATCC BAA-680 / CLIP 11262)).